We begin with the raw amino-acid sequence, 256 residues long: Imidazole glycerol phosphate synthase subunit HisF (256 aa).

Residues D12 and D131 contribute to the active site.

The protein belongs to the HisA/HisF family. Heterodimer of HisH and HisF.

Its subcellular location is the cytoplasm. It catalyses the reaction 5-[(5-phospho-1-deoxy-D-ribulos-1-ylimino)methylamino]-1-(5-phospho-beta-D-ribosyl)imidazole-4-carboxamide + L-glutamine = D-erythro-1-(imidazol-4-yl)glycerol 3-phosphate + 5-amino-1-(5-phospho-beta-D-ribosyl)imidazole-4-carboxamide + L-glutamate + H(+). It functions in the pathway amino-acid biosynthesis; L-histidine biosynthesis; L-histidine from 5-phospho-alpha-D-ribose 1-diphosphate: step 5/9. IGPS catalyzes the conversion of PRFAR and glutamine to IGP, AICAR and glutamate. The HisF subunit catalyzes the cyclization activity that produces IGP and AICAR from PRFAR using the ammonia provided by the HisH subunit. The polypeptide is Imidazole glycerol phosphate synthase subunit HisF (Bifidobacterium longum (strain NCC 2705)).